We begin with the raw amino-acid sequence, 873 residues long: Bifunctional heparan sulfate N-deacetylase/N-sulfotransferase 3 (873 aa).

Residues 1–13 lie on the Cytoplasmic side of the membrane; that stretch reads MSFIMKPHRHFQR. The helical; Signal-anchor for type II membrane protein transmembrane segment at 14–34 threads the bilayer; sequence TLILLATFCMVSIIISAYYLY. At 35–873 the chain is on the lumenal side; it reads SGYKQESEVS…WLRQELQKVR (839 aa). The interval 36–589 is heparan sulfate N-deacetylase 3; it reads GYKQESEVSG…KRHRDIWSKE (554 aa). N-linked (GlcNAc...) asparagine glycosylation is found at Asn-146, Asn-226, Asn-342, and Asn-392. A heparan sulfate N-sulfotransferase 3 region spans residues 590-873; the sequence is KTCDRLPKFL…WLRQELQKVR (284 aa). The For sulfotransferase activity role is filled by Lys-605. 605–609 lines the 3'-phosphoadenylyl sulfate pocket; the sequence is KTGTT. N-linked (GlcNAc...) asparagine glycosylation occurs at Asn-658. 3'-phosphoadenylyl sulfate is bound at residue Ser-703. A glycan (N-linked (GlcNAc...) asparagine) is linked at Asn-794. The cysteines at positions 809 and 819 are disulfide-linked. 824–828 contacts 3'-phosphoadenylyl sulfate; that stretch reads KGRKY.

The protein belongs to the sulfotransferase 1 family. NDST subfamily. In terms of assembly, monomer. Strongly expressed strongly in brain. Expressed at high level at embryonic day 11 compared to other stages of development. Weakly expressed in adult heart, kidney, muscle, endothelial cells and testis but not in other tissues.

The protein localises to the golgi apparatus membrane. The catalysed reaction is alpha-D-glucosaminyl-[heparan sulfate](n) + 3'-phosphoadenylyl sulfate = N-sulfo-alpha-D-glucosaminyl-[heparan sulfate](n) + adenosine 3',5'-bisphosphate + 2 H(+). Its pathway is glycan metabolism; heparan sulfate biosynthesis. The protein operates within glycan metabolism; heparin biosynthesis. Essential bifunctional enzyme that catalyzes both the N-deacetylation and the N-sulfation of glucosamine (GlcNAc) of the glycosaminoglycan in heparan sulfate. Modifies the GlcNAc-GlcA disaccharide repeating sugar backbone to make N-sulfated heparosan, a prerequisite substrate for later modifications in heparin biosynthesis. Has high deacetylase activity but low sulfotransferase activity. This is Bifunctional heparan sulfate N-deacetylase/N-sulfotransferase 3 (Ndst3) from Mus musculus (Mouse).